The primary structure comprises 331 residues: Fructose-1,6-bisphosphatase class 1 2 (331 aa).

4 residues coordinate Mg(2+): E91, D112, L114, and D115. Substrate-binding positions include 115 to 118 (DGSS), N207, Y238, and K268. E274 lines the Mg(2+) pocket.

The protein belongs to the FBPase class 1 family. Homotetramer. The cofactor is Mg(2+).

It is found in the cytoplasm. It catalyses the reaction beta-D-fructose 1,6-bisphosphate + H2O = beta-D-fructose 6-phosphate + phosphate. It functions in the pathway carbohydrate biosynthesis; Calvin cycle. The sequence is that of Fructose-1,6-bisphosphatase class 1 2 from Acaryochloris marina (strain MBIC 11017).